A 223-amino-acid chain; its full sequence is Proteasome subunit beta type-1 (223 aa).

The protein belongs to the peptidase T1B family. As to quaternary structure, the 26S proteasome consists of a 20S proteasome core and two 19S regulatory subunits. The 20S proteasome core is composed of 28 subunits that are arranged in four stacked rings, resulting in a barrel-shaped structure. The two end rings are each formed by seven alpha subunits, and the two central rings are each formed by seven beta subunits. The catalytic chamber with the active sites is on the inside of the barrel.

The protein resides in the cytoplasm. It localises to the nucleus. Functionally, non-catalytic component of the proteasome, a multicatalytic proteinase complex which is characterized by its ability to cleave peptides with Arg, Phe, Tyr, Leu, and Glu adjacent to the leaving group at neutral or slightly basic pH. The proteasome has an ATP-dependent proteolytic activity. This chain is Proteasome subunit beta type-1 (PBF1), found in Petunia hybrida (Petunia).